Here is a 386-residue protein sequence, read N- to C-terminus: Succinate--CoA ligase [ADP-forming] subunit beta (386 aa).

Residues 9–244 (KEILRKYGVP…HDEEDPLETR (236 aa)) form the ATP-grasp domain. ATP contacts are provided by residues K46, 53 to 55 (GRG), E99, C102, and E107. Mg(2+)-binding residues include N199 and D213. Substrate-binding positions include N264 and 321–323 (GIM).

It belongs to the succinate/malate CoA ligase beta subunit family. As to quaternary structure, heterotetramer of two alpha and two beta subunits. It depends on Mg(2+) as a cofactor.

The catalysed reaction is succinate + ATP + CoA = succinyl-CoA + ADP + phosphate. It catalyses the reaction GTP + succinate + CoA = succinyl-CoA + GDP + phosphate. It functions in the pathway carbohydrate metabolism; tricarboxylic acid cycle; succinate from succinyl-CoA (ligase route): step 1/1. Functionally, succinyl-CoA synthetase functions in the citric acid cycle (TCA), coupling the hydrolysis of succinyl-CoA to the synthesis of either ATP or GTP and thus represents the only step of substrate-level phosphorylation in the TCA. The beta subunit provides nucleotide specificity of the enzyme and binds the substrate succinate, while the binding sites for coenzyme A and phosphate are found in the alpha subunit. The protein is Succinate--CoA ligase [ADP-forming] subunit beta of Rickettsia conorii (strain ATCC VR-613 / Malish 7).